The sequence spans 296 residues: Beta-lactamase (296 aa).

The signal sequence occupies residues Met1 to Ala21. The Acyl-ester intermediate role is filled by Ser66. A substrate-binding site is contributed by Lys235–Gly237.

The protein belongs to the class-A beta-lactamase family.

It catalyses the reaction a beta-lactam + H2O = a substituted beta-amino acid. The polypeptide is Beta-lactamase (cblA) (Bacteroides uniformis).